Here is a 212-residue protein sequence, read N- to C-terminus: MVCGGFTCSKNALCALNVVYMLVGLLLIGVAAWGKGFGIVSSIHIIGGVIAIGVFLLLIAIIGLIGAVSHHQVMLFIYMVVLILVFIFQFIVSCSCLAMNRSQQEYFLNTTWRRMSNETRLNLEETLECCGFLNTTEARELFNKDVALCSHVCPDPHKCLSCGDKMLNHADEALKILGGVGLFFSFTEILGVWLAFRFRNQKDPRANPSAFL.

The Cytoplasmic portion of the chain corresponds to 1 to 12 (MVCGGFTCSKNA). A helical transmembrane segment spans residues 13 to 33 (LCALNVVYMLVGLLLIGVAAW). Over 34-44 (GKGFGIVSSIH) the chain is Extracellular. The chain crosses the membrane as a helical span at residues 45–65 (IIGGVIAIGVFLLLIAIIGLI). Residues 66–72 (GAVSHHQ) lie on the Cytoplasmic side of the membrane. Residues 73 to 93 (VMLFIYMVVLILVFIFQFIVS) form a helical membrane-spanning segment. Over 94 to 175 (CSCLAMNRSQ…MLNHADEALK (82 aa)) the chain is Extracellular. N-linked (GlcNAc...) asparagine glycosylation is found at N100, N109, N117, and N134. The chain crosses the membrane as a helical span at residues 176-196 (ILGGVGLFFSFTEILGVWLAF). Topologically, residues 197–212 (RFRNQKDPRANPSAFL) are cytoplasmic.

This sequence belongs to the tetraspanin (TM4SF) family.

Its subcellular location is the membrane. The protein is Tetraspanin-31-A (tspan31-a) of Xenopus laevis (African clawed frog).